A 36-amino-acid polypeptide reads, in one-letter code: Conotoxin Cl14.10 (36 aa).

A propeptide spanning residues 1–2 (NE) is cleaved from the precursor.

Post-translationally, contains 2 disulfide bond. As to expression, expressed by the venom duct.

It localises to the secreted. In Californiconus californicus (California cone), this protein is Conotoxin Cl14.10.